The sequence spans 832 residues: Protein P (832 aa).

Residues 1-177 (MPLSYQHFRR…FCGSPYSWEQ (177 aa)) form a terminal protein domain (TP) region. The spacer stretch occupies residues 178-335 (DLQHGAESIH…YCLSLIVNLL (158 aa)). Disordered stretches follow at residues 186 to 218 (IHQQ…QSQQ) and 239 to 266 (TARR…SCLY). Positions 336 to 679 (EDWGPCDEYG…YLNLYPVARQ (344 aa)) are polymerase/reverse transcriptase domain (RT). Positions 346-589 (EHHIRIPRTP…YSLHFMGYVI (244 aa)) constitute a Reverse transcriptase domain. Positions 418, 540, and 541 each coordinate Mg(2+).

Belongs to the hepadnaviridae P protein family.

It carries out the reaction DNA(n) + a 2'-deoxyribonucleoside 5'-triphosphate = DNA(n+1) + diphosphate. It catalyses the reaction Endonucleolytic cleavage to 5'-phosphomonoester.. Its activity is regulated as follows. Activated by host HSP70 and HSP40 in vitro to be able to bind the epsilon loop of the pgRNA. Because deletion of the RNase H region renders the protein partly chaperone-independent, the chaperones may be needed indirectly to relieve occlusion of the RNA-binding site by this domain. Inhibited by several reverse-transcriptase inhibitors: Lamivudine, Adefovir and Entecavir. Its function is as follows. Multifunctional enzyme that converts the viral RNA genome into dsDNA in viral cytoplasmic capsids. This enzyme displays a DNA polymerase activity that can copy either DNA or RNA templates, and a ribonuclease H (RNase H) activity that cleaves the RNA strand of RNA-DNA heteroduplexes in a partially processive 3'- to 5'-endonucleasic mode. Neo-synthesized pregenomic RNA (pgRNA) are encapsidated together with the P protein, and reverse-transcribed inside the nucleocapsid. Initiation of reverse-transcription occurs first by binding the epsilon loop on the pgRNA genome, and is initiated by protein priming, thereby the 5'-end of (-)DNA is covalently linked to P protein. Partial (+)DNA is synthesized from the (-)DNA template and generates the relaxed circular DNA (RC-DNA) genome. After budding and infection, the RC-DNA migrates in the nucleus, and is converted into a plasmid-like covalently closed circular DNA (cccDNA). The activity of P protein does not seem to be necessary for cccDNA generation, and is presumably released from (+)DNA by host nuclear DNA repair machinery. In Homo sapiens (Human), this protein is Protein P.